A 288-amino-acid polypeptide reads, in one-letter code: MDVTAKYELIGLMAYPIRHSLSPEMQNKALEKAGLPFTYMAFEVDNDSFPGAIEGLKALKMRGTGISMPNKQLACEYVDELTPAAKLVGAINTIVNDDGYLRGYNTDGTGHIRAIKESGFDIKGKTMVLLGAGGASTAIGAQGAIEGLKEIKLFNRRDEFFDKALAFAQRVNENTDCVVTVTDLADQQAFAEALASADILTNGTKVGMKPLENESLVNDISLLHPGLLVTECVYNPHMTKLLQQAQQAGCKTIDGYGMLLWQGAEQFTLWTGKDFPLEYVKQVMGFGA.

Lysine 71 and aspartate 107 together coordinate substrate. Residues 132–135, 155–158, lysine 205, 232–235, and glycine 255 contribute to the NAD(+) site; these read AGGA, NRRD, and CVYN.

It belongs to the shikimate dehydrogenase family. In terms of assembly, homodimer.

It catalyses the reaction L-quinate + NAD(+) = 3-dehydroquinate + NADH + H(+). The catalysed reaction is L-quinate + NADP(+) = 3-dehydroquinate + NADPH + H(+). The enzyme catalyses shikimate + NADP(+) = 3-dehydroshikimate + NADPH + H(+). It carries out the reaction shikimate + NAD(+) = 3-dehydroshikimate + NADH + H(+). Its pathway is metabolic intermediate biosynthesis; chorismate biosynthesis; chorismate from D-erythrose 4-phosphate and phosphoenolpyruvate: step 4/7. In terms of biological role, the actual biological function of YdiB remains unclear, nor is it known whether 3-dehydroshikimate or quinate represents the natural substrate. Catalyzes the reversible NAD-dependent reduction of both 3-dehydroshikimate (DHSA) and 3-dehydroquinate to yield shikimate (SA) and quinate, respectively. It can use both NAD or NADP for catalysis, however it has higher catalytic efficiency with NAD. The polypeptide is Quinate/shikimate dehydrogenase (Escherichia coli (strain 55989 / EAEC)).